Here is a 96-residue protein sequence, read N- to C-terminus: Large ribosomal subunit protein eL43 (96 aa).

The C4-type zinc-finger motif lies at 41–62 (CPVCAFPKLKRAGTSIWVCEKC).

The protein belongs to the eukaryotic ribosomal protein eL43 family. The cofactor is Zn(2+).

The chain is Large ribosomal subunit protein eL43 from Methanococcus maripaludis (strain C5 / ATCC BAA-1333).